The chain runs to 654 residues: Sucrose:sucrose 1-fructosyltransferase (654 aa).

The propeptide occupies 1 to 106 (MESSAVVPGT…VSEKASGAYS (106 aa)). An N-linked (GlcNAc...) asparagine glycan is attached at asparagine 32. The active site involves aspartate 136. Residues asparagine 328, asparagine 457, asparagine 491, asparagine 506, and asparagine 625 are each glycosylated (N-linked (GlcNAc...) asparagine).

Belongs to the glycosyl hydrolase 32 family. In terms of assembly, monomer. As to expression, accumulates at the base of growing leaves.

The protein resides in the vacuole. The enzyme catalyses 2 sucrose = 1(F)-beta-D-fructosylsucrose + D-glucose. Its function is as follows. Transferase involved in fructan biosynthesis that catalyzes the production of 1-kestose (fructose and nystose to a lower extent) from sucrose. Also exhibits some hydrolase activity toward 1-kestose, thus producing fructose and sucrose. A weak fructosyltransferase activity leads to the formation of nystose from 1-kestose. In Festuca arundinacea (Tall fescue), this protein is Sucrose:sucrose 1-fructosyltransferase (1-SST).